A 38-amino-acid polypeptide reads, in one-letter code: Alpha-2-macroglobulin homolog (38 aa).

The isoglutamyl cysteine thioester (Cys-Gln) cross-link spans 27 to 30 (CGEQ).

This sequence belongs to the protease inhibitor I39 (alpha-2-macroglobulin) family. In terms of assembly, homodimer; disulfide-linked. Hemolymph.

The protein resides in the secreted. In terms of biological role, is able to inhibit all four classes of proteinases by a unique 'trapping' mechanism. This protein has a peptide stretch, called the 'bait region' which contains specific cleavage sites for different proteinases. When a proteinase cleaves the bait region, a conformational change is induced in the protein which traps the proteinase. The entrapped enzyme remains active against low molecular weight substrates (activity against high molecular weight substrates is greatly reduced). Following cleavage in the bait region a thioester bond is hydrolyzed and mediates the covalent binding of the protein to the proteinase. The polypeptide is Alpha-2-macroglobulin homolog (Homarus americanus (American lobster)).